The primary structure comprises 409 residues: Nitrogen permease regulator 2 homolog (409 aa).

The protein belongs to the NPR2 family.

The protein resides in the cytoplasm. It localises to the nucleus. Functionally, mediates inactivation of the TORC1 complex in response to amino acid starvation. Post-transcriptional regulator of nitrogen permeases. This is Nitrogen permease regulator 2 homolog from Schizosaccharomyces pombe (strain 972 / ATCC 24843) (Fission yeast).